The following is a 360-amino-acid chain: MATTVHLSSSSLFSQSRGRRDNSISSVKSLRKRTVLSLSSALTSQDAGHMIQPEGKSNDNNSAFDFKLYMIRKAESVNAALDVSVPLLKPLTIQEAVRYSLLAGGKRVRPLLCIAACELVGGDEATAMSAACAVEMIHTSSLIHDDLPCMDNADLRRGKPTNHKVYGEDMAVLAGDALLALAFEHMTVVSSGLVAPEKMIRAVVELARAIGTTGLVAGQMIDLASERLNPDKVGLEHLEFIHLHKTAALLEAAAVLGVIMGGGTEQEIEKLRKYARCIGLLFQVVDDILDVTKSTEELGKTAGKDVMAGKLTYPRLIGLEGSREVAEKLRREAEEQLLGFDPSKAAPLVALASYIACRHN.

A chloroplast-targeting transit peptide spans 1-39; the sequence is MATTVHLSSSSLFSQSRGRRDNSISSVKSLRKRTVLSLS. Isopentenyl diphosphate contacts are provided by K106, R109, and H138. 2 residues coordinate Mg(2+): D145 and D151. R156 provides a ligand contact to dimethylallyl diphosphate. R157 serves as a coordination point for isopentenyl diphosphate. 5 residues coordinate dimethylallyl diphosphate: K245, T246, Q283, K300, and K310.

Belongs to the FPP/GGPP synthase family. In terms of assembly, monomer. No interactions with GGR. It depends on Mg(2+) as a cofactor.

The protein localises to the plastid. It localises to the chloroplast. The catalysed reaction is isopentenyl diphosphate + dimethylallyl diphosphate = (2E)-geranyl diphosphate + diphosphate. The enzyme catalyses isopentenyl diphosphate + (2E)-geranyl diphosphate = (2E,6E)-farnesyl diphosphate + diphosphate. It carries out the reaction isopentenyl diphosphate + (2E,6E)-farnesyl diphosphate = (2E,6E,10E)-geranylgeranyl diphosphate + diphosphate. It participates in isoprenoid biosynthesis; farnesyl diphosphate biosynthesis; farnesyl diphosphate from geranyl diphosphate and isopentenyl diphosphate: step 1/1. The protein operates within isoprenoid biosynthesis; geranyl diphosphate biosynthesis; geranyl diphosphate from dimethylallyl diphosphate and isopentenyl diphosphate: step 1/1. Its pathway is isoprenoid biosynthesis; geranylgeranyl diphosphate biosynthesis; geranylgeranyl diphosphate from farnesyl diphosphate and isopentenyl diphosphate: step 1/1. Functionally, catalyzes the trans-addition of the three molecules of IPP onto DMAPP to form geranylgeranyl pyrophosphate. The sequence is that of Geranylgeranyl pyrophosphate synthase 9, chloroplastic (GGPPS9) from Arabidopsis thaliana (Mouse-ear cress).